Reading from the N-terminus, the 64-residue chain is MAKNKGVRIVITLECTECRSNPAKRSPGVSRYTTEKNRRNTTERLEIKKFCPHCNKMTPHKEIK.

Belongs to the bacterial ribosomal protein bL33 family.

The polypeptide is Large ribosomal subunit protein bL33 (Parasynechococcus marenigrum (strain WH8102)).